The sequence spans 492 residues: MTLWINGDWVTGQGALRVKCNPVSGELLWQGNDADAAQVGQACRAARAAFPRWARLSFGDRQVRVERFAGLLESNKVELTAIIARETGKPRWEAATEVTAMINKIAISIKAYHVRTGEQRSEMPDGAASLRHRPHGVLAVFGPYNFPGHLPNGHIVPALLAGNTVIFKPSELTPWSGEAVMRLWQQAGLPSGVLNLVQGGRETGQALSALEDLDGLLFTGSANTGYQLHRQLSGQPEKILALEMGGNNPLIIDDVADIDAAVHLTIQSAFVTAGQRCTCARRLLLKSGAQGDAFLARLVAVSQRLTPGNWDDEPQPFIGGLISEQAAHQVVTAWQELEAMGGRTQLAPRLLRAGTSLLTPGIVEMTGVAGVPDEEVFGPLLRVWRYDTFDEAIRMANNTRFGLSCGLVSSRRDKFEQLLLEARAGIVNWNKPLTGAASTAPFGGVGASGNHRPSAWYAADYCAWPMASLESDSLTLPTTLNPGLDFSEEVER.

220–225 is a binding site for NAD(+); the sequence is GSANTG. Residues Glu243 and Cys277 contribute to the active site.

It belongs to the aldehyde dehydrogenase family. AstD subfamily.

The catalysed reaction is N-succinyl-L-glutamate 5-semialdehyde + NAD(+) + H2O = N-succinyl-L-glutamate + NADH + 2 H(+). The protein operates within amino-acid degradation; L-arginine degradation via AST pathway; L-glutamate and succinate from L-arginine: step 4/5. Functionally, catalyzes the NAD-dependent reduction of succinylglutamate semialdehyde into succinylglutamate. The sequence is that of N-succinylglutamate 5-semialdehyde dehydrogenase from Escherichia fergusonii (strain ATCC 35469 / DSM 13698 / CCUG 18766 / IAM 14443 / JCM 21226 / LMG 7866 / NBRC 102419 / NCTC 12128 / CDC 0568-73).